Reading from the N-terminus, the 331-residue chain is MHTNQLVDPFGRRITYLRLSVTDRCDFRCTYCMSEDMQFAPRQQILSLEELYAVADAFIGLGVRRIRITGGEPLVRKNLLSLLQRLGERDELDDLAITTNGSQLAEMAAPLRAAGVRRLNISLDSLQRERFAAFTRRDKLDQVLAGIDAARAAGFDRIKLNSVVQSGRNDDEVLDLVEFAVERGLDISFIEEMPLGSVVSHSREQTFCSSDEVRQRIEQRHALVRSSKVTGGPSRYWQVVGTQTQVGFISPHSHNFCGDCNRVRVTAEGKLVLCLGHDNALDLKRLLRAHPGDSERLRQALTEALRLKPERHHFATDEQVQVVRFMSMTGG.

One can recognise a Radical SAM core domain in the interval 9-233; sequence PFGRRITYLR…VRSSKVTGGP (225 aa). Residue arginine 18 coordinates GTP. The [4Fe-4S] cluster site is built by cysteine 25 and cysteine 29. Tyrosine 31 provides a ligand contact to S-adenosyl-L-methionine. Cysteine 32 is a binding site for [4Fe-4S] cluster. Arginine 67 lines the GTP pocket. Glycine 71 is a binding site for S-adenosyl-L-methionine. Threonine 98 lines the GTP pocket. Serine 122 contributes to the S-adenosyl-L-methionine binding site. Position 159 (lysine 159) interacts with GTP. Methionine 193 is a binding site for S-adenosyl-L-methionine. [4Fe-4S] cluster contacts are provided by cysteine 257 and cysteine 260. 262-264 serves as a coordination point for GTP; sequence RVR. A [4Fe-4S] cluster-binding site is contributed by cysteine 274.

This sequence belongs to the radical SAM superfamily. MoaA family. Monomer and homodimer. The cofactor is [4Fe-4S] cluster.

It catalyses the reaction GTP + AH2 + S-adenosyl-L-methionine = (8S)-3',8-cyclo-7,8-dihydroguanosine 5'-triphosphate + 5'-deoxyadenosine + L-methionine + A + H(+). The protein operates within cofactor biosynthesis; molybdopterin biosynthesis. Catalyzes the cyclization of GTP to (8S)-3',8-cyclo-7,8-dihydroguanosine 5'-triphosphate. The protein is GTP 3',8-cyclase of Ectopseudomonas mendocina (strain ymp) (Pseudomonas mendocina).